A 110-amino-acid polypeptide reads, in one-letter code: Inner membrane protein YgiZ (110 aa).

Residues methionine 1–threonine 8 lie on the Cytoplasmic side of the membrane. The helical transmembrane segment at isoleucine 9 to phenylalanine 29 threads the bilayer. At asparagine 30–arginine 53 the chain is on the periplasmic side. Residues isoleucine 54 to arginine 74 traverse the membrane as a helical segment. The Cytoplasmic segment spans residues lysine 75 to glutamate 83. The chain crosses the membrane as a helical span at residues phenylalanine 84–glycine 104. Topologically, residues arginine 105 to tyrosine 110 are periplasmic.

It localises to the cell inner membrane. The sequence is that of Inner membrane protein YgiZ (ygiZ) from Escherichia coli (strain K12).